The primary structure comprises 178 residues: Large ribosomal subunit protein uL5 (178 aa).

It belongs to the universal ribosomal protein uL5 family. In terms of assembly, part of the 50S ribosomal subunit; part of the 5S rRNA/L5/L18/L25 subcomplex. Contacts the 5S rRNA and the P site tRNA. Forms a bridge to the 30S subunit in the 70S ribosome.

In terms of biological role, this is one of the proteins that bind and probably mediate the attachment of the 5S RNA into the large ribosomal subunit, where it forms part of the central protuberance. In the 70S ribosome it contacts protein S13 of the 30S subunit (bridge B1b), connecting the 2 subunits; this bridge is implicated in subunit movement. Contacts the P site tRNA; the 5S rRNA and some of its associated proteins might help stabilize positioning of ribosome-bound tRNAs. The polypeptide is Large ribosomal subunit protein uL5 (Psychrobacter sp. (strain PRwf-1)).